The chain runs to 291 residues: Phytanoyl-CoA dioxygenase domain-containing protein 1 (291 aa).

At Thr55 the chain carries Phosphothreonine. Residues Lys102, Met141, His156 to Asp158, and Trp174 contribute to the 2-oxoglutarate site. 2 residues coordinate Fe cation: His156 and Asp158. Residue His246 participates in Fe cation binding. 2-oxoglutarate-binding residues include Ser248 and Arg257.

Belongs to the PhyH family. PHYHD1 subfamily. Fe cation serves as cofactor.

Functionally, 2-oxoglutarate(2OG)-dependent dioxygenase that catalyzes the conversion of 2-oxoglutarate to succinate and CO(2) in an iron-dependent manner. However, does not couple 2OG turnover to the hydroxylation of acyl-coenzyme A derivatives, implying that it is not directly involved in phytanoyl coenzyme-A metabolism. Does not show detectable activity towards fatty acid CoA thioesters. This Bos taurus (Bovine) protein is Phytanoyl-CoA dioxygenase domain-containing protein 1 (PHYHD1).